A 43-amino-acid chain; its full sequence is AAPCSCPGKPGRGDLWIFRGTCPGGYGYTSNCYKWPNICCYPH.

3 disulfide bridges follow: cysteine 4–cysteine 39, cysteine 6–cysteine 32, and cysteine 22–cysteine 40.

It localises to the secreted. Its subcellular location is the nematocyst. Its function is as follows. Blocks Kv3 voltage-gated potassium channels. Reduces blood pressure. In Anemonia viridis (Snakelocks anemone), this protein is Kappa-actitoxin-Avd4p.